A 649-amino-acid chain; its full sequence is Flavin-dependent oxygenase ucdD (649 aa).

Q92, I185, Y344, D370, and S386 together coordinate FAD.

This sequence belongs to the PheA/TfdB FAD monooxygenase family. Homodimer. It depends on FAD as a cofactor.

It functions in the pathway secondary metabolite biosynthesis. Functionally, nonribosomal peptide synthetase that mediates the biosynthesis of usterphenyllins and uscandidusins, p-terphenyl derivatives. Within the pathway, ucdD catalyzes the formation of 3,15-dihydroxyterphenyllin via dihydroxylation at C-3 of ring A and C-15 of ring C of the terphenyllin intermediate. The pathway begin with the biosynthesis of 4-hydroxyphenylpyruvate (HPPA) from L-tyrosine, possibly by the aminotransferase ucdG. The nonribosomal peptide synthetase ucdA then condenses two HPPA units to produce atromentin. The key step in this pathway is the reduction and dehydration of atromentin to form a terphenyl triol intermediate, performed by the NAD-dependent dehydrogenase ucdB. Further O-methylation by the methyltransferase ucdC forms terphenyllin carrying two methoxy moieties at C-9 and C-12, and subsequent dihydroxylation at C-3 of ring A and C-15 of ring C by the flavin-dependent oxygenase ucdD leads to 3,15-dihydroxyterphenyllin. Prenylation by ucdE at position C-5 of ring A forms usterphenyllin B, and is followed by a second prenylation at position C-14 of ring C to form usterphenyllin A. The following furan ring formation that leads to uscandidusins A and B was proven to be an unexpected spontaneous non-enzymatic reaction. This chain is Flavin-dependent oxygenase ucdD, found in Aspergillus ustus.